Consider the following 634-residue polypeptide: tRNA uridine 5-carboxymethylaminomethyl modification enzyme MnmG (634 aa).

14 to 19 (GGGHAG) lines the FAD pocket. Residue 279-293 (GPRYCPSIEDKVVRF) coordinates NAD(+).

It belongs to the MnmG family. Homodimer. Heterotetramer of two MnmE and two MnmG subunits. Requires FAD as cofactor.

The protein resides in the cytoplasm. NAD-binding protein involved in the addition of a carboxymethylaminomethyl (cmnm) group at the wobble position (U34) of certain tRNAs, forming tRNA-cmnm(5)s(2)U34. The chain is tRNA uridine 5-carboxymethylaminomethyl modification enzyme MnmG from Xanthomonas campestris pv. campestris (strain 8004).